Here is a 346-residue protein sequence, read N- to C-terminus: Phosphate acyltransferase (346 aa).

The protein belongs to the PlsX family. Homodimer. Probably interacts with PlsY.

The protein localises to the cytoplasm. It catalyses the reaction a fatty acyl-[ACP] + phosphate = an acyl phosphate + holo-[ACP]. The protein operates within lipid metabolism; phospholipid metabolism. Its function is as follows. Catalyzes the reversible formation of acyl-phosphate (acyl-PO(4)) from acyl-[acyl-carrier-protein] (acyl-ACP). This enzyme utilizes acyl-ACP as fatty acyl donor, but not acyl-CoA. The polypeptide is Phosphate acyltransferase (Psychromonas ingrahamii (strain DSM 17664 / CCUG 51855 / 37)).